The sequence spans 277 residues: Serine protease 33 (277 aa).

Positions 1–24 are cleaved as a signal peptide; that stretch reads MRGASHLQILLLLVLGTRMQECAA. A Peptidase S1 domain is found at 34-276; that stretch reads IVGGRDAQDG…YSPWIQARLS (243 aa). Cysteines 59 and 75 form a disulfide. Active-site charge relay system residues include His74 and Asp123. Disulfide bonds link Cys157/Cys234, Cys190/Cys213, and Cys224/Cys252. Ser228 functions as the Charge relay system in the catalytic mechanism.

This sequence belongs to the peptidase S1 family. In terms of processing, not glycosylated. In terms of tissue distribution, widely expressed.

It is found in the secreted. In terms of biological role, serine protease that has amidolytic activity, cleaving its substrates before Arg residues. This Mus musculus (Mouse) protein is Serine protease 33 (Prss33).